The sequence spans 650 residues: Protein KINESIN LIGHT CHAIN-RELATED 3 (650 aa).

Residues 104-141 (EKQTGKKNVTKSNVGVGGMRKKKVGGTKLQNGNEEPSS) form a disordered region. The span at 131 to 141 (KLQNGNEEPSS) shows a compositional bias: polar residues. TPR repeat units lie at residues 192-225 (IMCLHVTAAVHCKLKEYNEAIPVLQRSVEIPVVE), 235-268 (FAGLMQLGDTYAMVGQLESSISCYTEGLNIQKKV), 277-310 (GETCRYLAEALVQALRFDEAQQVCETALSIHRES), 319-353 (AADRRLMGLICETKGDHENALEHLVLASMAMAANG), 359-392 (AFVDTSIGDSYLSLSRFDEAICAYQKSLTALKTA), 401-434 (GSVYIRLADLYNRTGKVREAKSYCENALRIYESH), 444-477 (ASGLTDISVICESMNEVEQAITLLQKALKIYADS), 485-518 (AGIEAQMGVLYYMMGKYMESYNTFKSAISKLRAT), 527-560 (GIALNQMGLACIQLDAIEEAVELFEEAKCILEQE), and 569-602 (LGLYSNLAGAYDAIGRLDDAIKLLGHVVGVREEK).

It belongs to the kinesin light chain family.

This is Protein KINESIN LIGHT CHAIN-RELATED 3 from Arabidopsis thaliana (Mouse-ear cress).